The following is a 215-amino-acid chain: MTKLTARQQQVFDLIRRAIERSGFPPTRAEIAAELGFSSPNAAEEHLRALARKGVIELAAGASRGIRLLGIDDMPHQFTLPHAGLMQLSLPLVGRVAAGSPILAQEHISQHYACDPALFTSKPDYLLKVRGLSMRDAGILDGDLLAVQKRTEAKDGQIIVARLGDDVTVKRLMRRPGGIELIAENPDYENIFVKAGSAEFALEGIAVGLIRSGEL.

Positions 28–48 form a DNA-binding region, H-T-H motif; the sequence is RAEIAAELGFSSPNAAEEHLR. Catalysis depends on for autocatalytic cleavage activity residues Ser-133 and Lys-170.

Belongs to the peptidase S24 family. Homodimer.

It carries out the reaction Hydrolysis of Ala-|-Gly bond in repressor LexA.. Its function is as follows. Represses a number of genes involved in the response to DNA damage (SOS response), including recA and lexA. In the presence of single-stranded DNA, RecA interacts with LexA causing an autocatalytic cleavage which disrupts the DNA-binding part of LexA, leading to derepression of the SOS regulon and eventually DNA repair. This chain is LexA repressor, found in Burkholderia vietnamiensis (strain G4 / LMG 22486) (Burkholderia cepacia (strain R1808)).